The chain runs to 376 residues: uncharacterized protein (376 aa).

The protein belongs to the YCR102c/YLR460c/YNL134c family.

This is an uncharacterized protein from Saccharomyces cerevisiae (strain ATCC 204508 / S288c) (Baker's yeast).